The sequence spans 121 residues: Large ribosomal subunit protein uL22c (121 aa).

This sequence belongs to the universal ribosomal protein uL22 family. Part of the 50S ribosomal subunit.

The protein localises to the plastid. It localises to the chloroplast. Functionally, this protein binds specifically to 23S rRNA. In terms of biological role, the globular domain of the protein is located near the polypeptide exit tunnel on the outside of the subunit, while an extended beta-hairpin is found that lines the wall of the exit tunnel in the center of the 70S ribosome. The polypeptide is Large ribosomal subunit protein uL22c (rpl22) (Lemna minor (Common duckweed)).